A 179-amino-acid polypeptide reads, in one-letter code: Large ribosomal subunit protein uL6 (179 aa).

This sequence belongs to the universal ribosomal protein uL6 family. In terms of assembly, part of the 50S ribosomal subunit.

This protein binds to the 23S rRNA, and is important in its secondary structure. It is located near the subunit interface in the base of the L7/L12 stalk, and near the tRNA binding site of the peptidyltransferase center. The polypeptide is Large ribosomal subunit protein uL6 (Fructilactobacillus sanfranciscensis (Lactobacillus sanfranciscensis)).